A 432-amino-acid chain; its full sequence is Adenylosuccinate synthetase (432 aa).

GTP contacts are provided by residues 12 to 18 (GDEGKGK) and 40 to 42 (GHT). Asp-13 serves as the catalytic Proton acceptor. The Mg(2+) site is built by Asp-13 and Gly-40. IMP-binding positions include 13–16 (DEGK), 38–41 (NAGH), Thr-128, Arg-142, Gln-223, Thr-238, and Arg-302. His-41 serves as the catalytic Proton donor. 298 to 304 (TVTGRPR) contacts substrate. GTP-binding positions include Arg-304, 330-332 (LLD), and 412-414 (SVG).

Belongs to the adenylosuccinate synthetase family. In terms of assembly, homodimer. It depends on Mg(2+) as a cofactor.

It is found in the cytoplasm. The enzyme catalyses IMP + L-aspartate + GTP = N(6)-(1,2-dicarboxyethyl)-AMP + GDP + phosphate + 2 H(+). The protein operates within purine metabolism; AMP biosynthesis via de novo pathway; AMP from IMP: step 1/2. In terms of biological role, plays an important role in the de novo pathway of purine nucleotide biosynthesis. Catalyzes the first committed step in the biosynthesis of AMP from IMP. The chain is Adenylosuccinate synthetase from Limosilactobacillus reuteri (strain DSM 20016) (Lactobacillus reuteri).